A 113-amino-acid chain; its full sequence is UPF0122 protein Sez_1013 (113 aa).

The protein belongs to the UPF0122 family.

Functionally, might take part in the signal recognition particle (SRP) pathway. This is inferred from the conservation of its genetic proximity to ftsY/ffh. May be a regulatory protein. This Streptococcus equi subsp. zooepidemicus (strain MGCS10565) protein is UPF0122 protein Sez_1013.